The chain runs to 838 residues: Polyribonucleotide nucleotidyltransferase (838 aa).

Mg(2+)-binding residues include D494 and D500. The KH domain maps to 561–620 (PRMESMLIDKGKIKNVIGAGGKNVREICEKTGAKIEISQDGTVMIYAVGREAIESAKDMI). The region spanning 630–697 (GKIYSGEVCE…DKDHIQLSMR (68 aa)) is the S1 motif domain. Residues 747–757 (GGASAGRNGRG) show a composition bias toward gly residues. Residues 747 to 838 (GGASAGRNGR…PAAPKKPRFF (92 aa)) form a disordered region. Residues 788–810 (AGSSGYSSDSSSGNTKSSSSESS) show a composition bias toward low complexity. Residues 811 to 820 (GGTGGRGRNG) show a composition bias toward gly residues.

It belongs to the polyribonucleotide nucleotidyltransferase family. Mg(2+) is required as a cofactor.

It is found in the cytoplasm. The catalysed reaction is RNA(n+1) + phosphate = RNA(n) + a ribonucleoside 5'-diphosphate. Its function is as follows. Involved in mRNA degradation. Catalyzes the phosphorolysis of single-stranded polyribonucleotides processively in the 3'- to 5'-direction. The chain is Polyribonucleotide nucleotidyltransferase from Anaplasma phagocytophilum (strain HZ).